Here is a 485-residue protein sequence, read N- to C-terminus: NADH-quinone oxidoreductase subunit N (485 aa).

14 consecutive transmembrane segments (helical) span residues 8–28 (LIALLPLLIVGLTVVVVMLSI), 35–55 (FLNATLSVIGLNAALVSLWFV), 71–91 (GFAMLYTGLVLLASLATCTFA), 105–125 (FYLLVLIAALGGILLANANHL), 127–147 (SLFLGIELISLPLFGLVGYAF), 159–179 (YTILSAAASSFLLFGMALVYA), 203–223 (LLAGFGLMIVGLGFKLSLVPF), 235–255 (PAPVSTFLATASKIVIFGVVM), 271–291 (VVLAIIAFASIIFGNLMALSQ), 297–317 (LLGYSSISHLGYLLVALIALQ), 326–346 (VGVYLAGYLFSSLGAFGVVSL), 373–393 (AAVMTVMMLSLAGIPMTLGFI), 408–430 (WWLVGAVVVGSAIGLYYYLRVAV), and 455–475 (IVVLISALLVLVLGVWPQPLI).

This sequence belongs to the complex I subunit 2 family. NDH-1 is composed of 13 different subunits. Subunits NuoA, H, J, K, L, M, N constitute the membrane sector of the complex.

It is found in the cell inner membrane. The catalysed reaction is a quinone + NADH + 5 H(+)(in) = a quinol + NAD(+) + 4 H(+)(out). NDH-1 shuttles electrons from NADH, via FMN and iron-sulfur (Fe-S) centers, to quinones in the respiratory chain. The immediate electron acceptor for the enzyme in this species is believed to be ubiquinone. Couples the redox reaction to proton translocation (for every two electrons transferred, four hydrogen ions are translocated across the cytoplasmic membrane), and thus conserves the redox energy in a proton gradient. This is NADH-quinone oxidoreductase subunit N from Shigella dysenteriae serotype 1 (strain Sd197).